We begin with the raw amino-acid sequence, 534 residues long: Prolyl 4-hydroxylase subunit alpha-1 (534 aa).

Residues 1–17 form the signal peptide; sequence MIWYILIIGILLPQSLA. N-linked (GlcNAc...) asparagine glycosylation is present at Asn-113. The stretch at 205–238 is one TPR repeat; the sequence is VSVLDYLSYAVYQQGDLDKALLLTKKLLELDPEH. Residue Asn-259 is glycosylated (N-linked (GlcNAc...) asparagine). Residues 411–519 enclose the Fe2OG dioxygenase domain; that stretch reads TAEELQVANY…KWVSNKWLHE (109 aa). 3 residues coordinate Fe cation: His-429, Asp-431, and His-500. Residue Lys-510 participates in 2-oxoglutarate binding.

Belongs to the P4HA family. In terms of assembly, heterotetramer of two alpha-1 chains and two beta chains (P4HB)(the beta chain is the multi-functional PDI), where P4HB plays the role of a structural subunit; this tetramer catalyzes the formation of 4-hydroxyproline in collagen. Fe(2+) serves as cofactor. The cofactor is L-ascorbate. In terms of tissue distribution, expressed in the heart, liver, skeletal muscle, kidney, placenta, lung and pancreas.

It is found in the endoplasmic reticulum lumen. It carries out the reaction L-prolyl-[collagen] + 2-oxoglutarate + O2 = trans-4-hydroxy-L-prolyl-[collagen] + succinate + CO2. Inhibited by poly(L-proline). Its function is as follows. Catalyzes the post-translational formation of 4-hydroxyproline in -Xaa-Pro-Gly- sequences in collagens and other proteins. In Homo sapiens (Human), this protein is Prolyl 4-hydroxylase subunit alpha-1 (P4HA1).